A 264-amino-acid polypeptide reads, in one-letter code: Thymidylate synthase (264 aa).

DUMP is bound by residues arginine 21 and 126–127 (RR). Cysteine 146 (nucleophile) is an active-site residue. Residues 166-169 (RSAD), asparagine 177, and 207-209 (HLY) each bind dUMP. Aspartate 169 is a binding site for (6R)-5,10-methylene-5,6,7,8-tetrahydrofolate. Alanine 263 lines the (6R)-5,10-methylene-5,6,7,8-tetrahydrofolate pocket.

The protein belongs to the thymidylate synthase family. Bacterial-type ThyA subfamily. In terms of assembly, homodimer.

It is found in the cytoplasm. It catalyses the reaction dUMP + (6R)-5,10-methylene-5,6,7,8-tetrahydrofolate = 7,8-dihydrofolate + dTMP. The protein operates within pyrimidine metabolism; dTTP biosynthesis. Catalyzes the reductive methylation of 2'-deoxyuridine-5'-monophosphate (dUMP) to 2'-deoxythymidine-5'-monophosphate (dTMP) while utilizing 5,10-methylenetetrahydrofolate (mTHF) as the methyl donor and reductant in the reaction, yielding dihydrofolate (DHF) as a by-product. This enzymatic reaction provides an intracellular de novo source of dTMP, an essential precursor for DNA biosynthesis. The chain is Thymidylate synthase from Rhodopseudomonas palustris (strain HaA2).